The sequence spans 726 residues: Catalase-peroxidase (726 aa).

The tract at residues 1-33 (MSTSDDIHNTTATGKCPFHQGGHDQSAGGGTTT) is disordered. The segment at residues 105-226 (WHGAGTYRSI…LGATEMGLIY (122 aa)) is a cross-link (tryptophyl-tyrosyl-methioninium (Trp-Tyr) (with M-252)). H106 functions as the Proton acceptor in the catalytic mechanism. The tryptophyl-tyrosyl-methioninium (Tyr-Met) (with W-105) cross-link spans 226 to 252 (YVNPEGPDHSGEPLSAAAAIRATFGNM). H267 is a binding site for heme b.

Belongs to the peroxidase family. Peroxidase/catalase subfamily. Homodimer or homotetramer. Heme b is required as a cofactor. In terms of processing, formation of the three residue Trp-Tyr-Met cross-link is important for the catalase, but not the peroxidase activity of the enzyme.

It carries out the reaction H2O2 + AH2 = A + 2 H2O. It catalyses the reaction 2 H2O2 = O2 + 2 H2O. Functionally, bifunctional enzyme with both catalase and broad-spectrum peroxidase activity. This chain is Catalase-peroxidase, found in Escherichia coli O1:K1 / APEC.